Reading from the N-terminus, the 512-residue chain is Cytochrome P450 1A1 (512 aa).

Positions 29 to 40 are mitochondrial targeting signal; sequence SRPQVPKGLKNP. A glycan (O-linked (GlcNAc) serine) is linked at Ser-67. Phe-224 provides a ligand contact to substrate. Residue Cys-457 coordinates heme.

This sequence belongs to the cytochrome P450 family. In terms of assembly, interacts with cytosolic chaperones HSP70 and HSP90; this interaction is required for initial targeting to mitochondria. Interacts (via mitochondrial targeting signal) with TOMM40 (via N-terminus); this interaction is required for translocation across the mitochondrial outer membrane. Requires heme as cofactor. Lung, lymphocytes and placenta.

It is found in the endoplasmic reticulum membrane. It localises to the mitochondrion inner membrane. The protein resides in the microsome membrane. The protein localises to the cytoplasm. It carries out the reaction an organic molecule + reduced [NADPH--hemoprotein reductase] + O2 = an alcohol + oxidized [NADPH--hemoprotein reductase] + H2O + H(+). It catalyses the reaction estrone + reduced [NADPH--hemoprotein reductase] + O2 = 2-hydroxyestrone + oxidized [NADPH--hemoprotein reductase] + H2O + H(+). The enzyme catalyses estrone + reduced [NADPH--hemoprotein reductase] + O2 = 4-hydroxyestrone + oxidized [NADPH--hemoprotein reductase] + H2O + H(+). The catalysed reaction is estrone + reduced [NADPH--hemoprotein reductase] + O2 = 6alpha-hydroxyestrone + oxidized [NADPH--hemoprotein reductase] + H2O + H(+). It carries out the reaction estrone + reduced [NADPH--hemoprotein reductase] + O2 = 15alpha-hydroxyestrone + oxidized [NADPH--hemoprotein reductase] + H2O + H(+). It catalyses the reaction estrone + reduced [NADPH--hemoprotein reductase] + O2 = 16alpha-hydroxyestrone + oxidized [NADPH--hemoprotein reductase] + H2O + H(+). The enzyme catalyses 17beta-estradiol + reduced [NADPH--hemoprotein reductase] + O2 = 2-hydroxy-17beta-estradiol + oxidized [NADPH--hemoprotein reductase] + H2O + H(+). The catalysed reaction is 17beta-estradiol + reduced [NADPH--hemoprotein reductase] + O2 = 4-hydroxy-17beta-estradiol + oxidized [NADPH--hemoprotein reductase] + H2O + H(+). It carries out the reaction 17beta-estradiol + reduced [NADPH--hemoprotein reductase] + O2 = 6alpha-hydroxy-17beta-estradiol + oxidized [NADPH--hemoprotein reductase] + H2O + H(+). It catalyses the reaction 17beta-estradiol + reduced [NADPH--hemoprotein reductase] + O2 = 7alpha-hydroxy-17beta-estradiol + oxidized [NADPH--hemoprotein reductase] + H2O + H(+). The enzyme catalyses 17beta-estradiol + reduced [NADPH--hemoprotein reductase] + O2 = 15alpha-hydroxy-17beta-estradiol + oxidized [NADPH--hemoprotein reductase] + H2O + H(+). The catalysed reaction is (5Z,8Z,11Z)-eicosatrienoate + reduced [NADPH--hemoprotein reductase] + O2 = 19-hydroxy-(5Z,8Z,11Z)-eicosatrienoate + oxidized [NADPH--hemoprotein reductase] + H2O + H(+). It carries out the reaction (5Z,8Z,11Z,14Z)-eicosatetraenoate + reduced [NADPH--hemoprotein reductase] + O2 = 16-hydroxy-(5Z,8Z,11Z,14Z)-eicosatetraenoate + oxidized [NADPH--hemoprotein reductase] + H2O + H(+). It catalyses the reaction (5Z,8Z,11Z,14Z)-eicosatetraenoate + reduced [NADPH--hemoprotein reductase] + O2 = 17-hydroxy-(5Z,8Z,11Z,14Z)-eicosatetraenoate + oxidized [NADPH--hemoprotein reductase] + H2O + H(+). The enzyme catalyses (5Z,8Z,11Z,14Z)-eicosatetraenoate + reduced [NADPH--hemoprotein reductase] + O2 = 18-hydroxy-(5Z,8Z,11Z,14Z)-eicosatetraenoate + oxidized [NADPH--hemoprotein reductase] + H2O + H(+). The catalysed reaction is (5Z,8Z,11Z,14Z)-eicosatetraenoate + reduced [NADPH--hemoprotein reductase] + O2 = 19-hydroxy-(5Z,8Z,11Z,14Z)-eicosatetraenoate + oxidized [NADPH--hemoprotein reductase] + H2O + H(+). It carries out the reaction (5Z,8Z,11Z,14Z,17Z)-eicosapentaenoate + reduced [NADPH--hemoprotein reductase] + O2 = 19-hydroxy-(5Z,8Z,11Z,14Z,17Z)-eicosapentaenoate + oxidized [NADPH--hemoprotein reductase] + H2O + H(+). It catalyses the reaction (5Z,8Z,11Z,14Z)-eicosatetraenoate + reduced [NADPH--hemoprotein reductase] + O2 = (8R,9S)-epoxy-(5Z,11Z,14Z)-eicosatrienoate + oxidized [NADPH--hemoprotein reductase] + H2O + H(+). The enzyme catalyses (5Z,8Z,11Z,14Z)-eicosatetraenoate + reduced [NADPH--hemoprotein reductase] + O2 = (11R,12S)-epoxy-(5Z,8Z,14Z)-eicosatrienoate + oxidized [NADPH--hemoprotein reductase] + H2O + H(+). The catalysed reaction is (5Z,8Z,11Z,14Z)-eicosatetraenoate + reduced [NADPH--hemoprotein reductase] + O2 = (14S,15R)-epoxy-(5Z,8Z,11Z)-eicosatrienoate + oxidized [NADPH--hemoprotein reductase] + H2O + H(+). It carries out the reaction (5Z,8Z,11Z,14Z)-eicosatetraenoate + reduced [NADPH--hemoprotein reductase] + O2 = (14R,15S)-epoxy-(5Z,8Z,11Z)-eicosatrienoate + oxidized [NADPH--hemoprotein reductase] + H2O + H(+). It catalyses the reaction (5Z,8Z,11Z,14Z,17Z)-eicosapentaenoate + reduced [NADPH--hemoprotein reductase] + O2 = (17R,18S)-epoxy-(5Z,8Z,11Z,14Z)-eicosatetraenoate + oxidized [NADPH--hemoprotein reductase] + H2O + H(+). The enzyme catalyses (4Z,7Z,10Z,13Z,16Z,19Z)-docosahexaenoate + reduced [NADPH--hemoprotein reductase] + O2 = (19S,20R)-epoxy-(4Z,7Z,10Z,13Z,16Z)-docosapentaenoate + oxidized [NADPH--hemoprotein reductase] + H2O + H(+). The catalysed reaction is (4Z,7Z,10Z,13Z,16Z,19Z)-docosahexaenoate + reduced [NADPH--hemoprotein reductase] + O2 = (19R,20S)-epoxy-(4Z,7Z,10Z,13Z,16Z)-docosapentaenoate + oxidized [NADPH--hemoprotein reductase] + H2O + H(+). It carries out the reaction all-trans-retinol + reduced [NADPH--hemoprotein reductase] + O2 = all-trans-retinal + oxidized [NADPH--hemoprotein reductase] + 2 H2O + H(+). It catalyses the reaction all-trans-retinal + reduced [NADPH--hemoprotein reductase] + O2 = all-trans-retinoate + oxidized [NADPH--hemoprotein reductase] + H2O + 2 H(+). The enzyme catalyses (13S)-hydroperoxy-(9Z,11E)-octadecadienoate = 13-oxo-(9Z,11E)-octadecadienoate + H2O. The catalysed reaction is (12S)-hydroperoxy-(5Z,8Z,10E,14Z)-eicosatetraenoate = 12-oxo-(5Z,8Z,10E,14Z)-eicosatetraenoate + H2O. It carries out the reaction (15S)-hydroperoxy-(5Z,8Z,11Z,13E)-eicosatetraenoate = 15-oxo-(5Z,8Z,11Z,13E)-eicosatetraenoate + H2O. It catalyses the reaction (5S)-hydroperoxy-(6E,8Z,11Z,14Z)-eicosatetraenoate = 5-oxo-(6E,8Z,11Z,14Z)-eicosatetraenoate + H2O. It participates in steroid hormone biosynthesis. Its pathway is lipid metabolism; fatty acid metabolism. It functions in the pathway cofactor metabolism; retinol metabolism. A cytochrome P450 monooxygenase involved in the metabolism of various endogenous substrates, including fatty acids, steroid hormones and vitamins. Mechanistically, uses molecular oxygen inserting one oxygen atom into a substrate, and reducing the second into a water molecule, with two electrons provided by NADPH via cytochrome P450 reductase (NADPH--hemoprotein reductase). Catalyzes the hydroxylation of carbon-hydrogen bonds. Exhibits high catalytic activity for the formation of hydroxyestrogens from estrone (E1) and 17beta-estradiol (E2), namely 2-hydroxy E1 and E2, as well as D-ring hydroxylated E1 and E2 at the C15-alpha and C16-alpha positions. Displays different regioselectivities for polyunsaturated fatty acids (PUFA) hydroxylation. Catalyzes the epoxidation of double bonds of certain PUFA. Converts arachidonic acid toward epoxyeicosatrienoic acid (EET) regioisomers, 8,9-, 11,12-, and 14,15-EET, that function as lipid mediators in the vascular system. Displays an absolute stereoselectivity in the epoxidation of eicosapentaenoic acid (EPA) producing the 17(R),18(S) enantiomer. May play an important role in all-trans retinoic acid biosynthesis in extrahepatic tissues. Catalyzes two successive oxidative transformation of all-trans retinol to all-trans retinal and then to the active form all-trans retinoic acid. May also participate in eicosanoids metabolism by converting hydroperoxide species into oxo metabolites (lipoxygenase-like reaction, NADPH-independent). This is Cytochrome P450 1A1 from Homo sapiens (Human).